Reading from the N-terminus, the 1147-residue chain is PDZ domain-containing protein 8 (1147 aa).

The helical transmembrane segment at 2 to 24 threads the bilayer; the sequence is GLLLLILASAVLGSFLTLLAQFL. The region spanning 87–293 is the SMP-LTD domain; that stretch reads APPTLETCYF…LPSYKIRFKP (207 aa). A PDZ domain is found at 365–448; it reads TVELIKGNLQ…RVLVYYQRPA (84 aa). Phosphoserine occurs at positions 490, 515, and 532. The disordered stretch occupies residues 504-673; that stretch reads ELKEETQPLS…DSSDDPQMWE (170 aa). Polar residues predominate over residues 510 to 524; the sequence is QPLSHSPKRTPTTLS. Residues 557-576 are compositionally biased toward polar residues; the sequence is KPSTLKTSETTEAAQVSKPQ. The span at 580-596 shows a compositional bias: pro residues; it reads FKPPVPPRPQGRVPLPP. The Phorbol-ester/DAG-type zinc finger occupies 833–884; sequence KHSFQDTQFQNPTWCDYCKKKVWTKAASQCMFCAYVCHKKCQEKCLAETPLC. Residues 948–990 form a disordered region; it reads RLSEPGTDLVEPSPKHTPNTSDNEGSDTEVCGSNSPSKRGNSA. Phosphoserine is present on residues Ser960 and Ser973. The segment covering 978–987 has biased composition (polar residues); it reads CGSNSPSKRG. Residues 1021-1056 are a coiled coil; the sequence is PTEERIQKLEFMLDKLQNEIDQELEHNNSLVREEKE. Residues 1126 to 1137 are compositionally biased toward polar residues; sequence QLIDSQPFSNIS. The segment at 1126–1147 is disordered; sequence QLIDSQPFSNISDDLFGPSESV.

In terms of assembly, interacts with MSN.

The protein localises to the endoplasmic reticulum membrane. Molecular tethering protein that connects endoplasmic reticulum and mitochondria membranes. PDZD8-dependent endoplasmic reticulum-mitochondria membrane tethering is essential for endoplasmic reticulum-mitochondria Ca(2+) transfer. In neurons, involved in the regulation of dendritic Ca(2+) dynamics by regulating mitochondrial Ca(2+) uptake in neurons. The polypeptide is PDZ domain-containing protein 8 (Mus musculus (Mouse)).